The chain runs to 639 residues: Coiled-coil domain-containing protein 27 (639 aa).

The tract at residues 154-176 (YPRKRSEPSDPSPTGSPTVVKKS) is disordered. A coiled-coil region spans residues 203 to 242 (QRFSEMESQMQKKDQEILTLQKEKEALKKQLKNLLRGKGT). Residues 291–385 (ESSKELHVEP…EECHPKRSYS (95 aa)) are disordered. Positions 292 to 309 (SSKELHVEPGSAIEEKSS) are enriched in basic and acidic residues. Positions 310 to 320 (EGPPEEAAAAK) are enriched in low complexity. Acidic residues-rich tracts occupy residues 336–350 (GPEEEEEEEEEEVEG) and 358–369 (EGEILVNEEEAS). Over residues 370-380 (WELREDEECHP) the composition is skewed to basic and acidic residues.

This chain is Coiled-coil domain-containing protein 27 (Ccdc27), found in Mus musculus (Mouse).